Reading from the N-terminus, the 375-residue chain is Tryptophan dimethylallyltransferase (375 aa).

Residues 83–84 (IL) and glutamate 92 contribute to the L-tryptophan site. Residues arginine 103, lysine 189, and tyrosine 191 each coordinate substrate. Residues tyrosine 193 and arginine 246 each coordinate L-tryptophan. Substrate contacts are provided by arginine 259, lysine 261, tyrosine 263, glutamine 345, and tyrosine 347.

The protein belongs to the tryptophan dimethylallyltransferase family. In terms of assembly, homodimer.

The enzyme catalyses L-tryptophan + dimethylallyl diphosphate = 4-(3-methylbut-2-enyl)-L-tryptophan + diphosphate. The protein operates within alkaloid biosynthesis; ergot alkaloid biosynthesis. Its function is as follows. Tryptophan dimethylallyltransferase; part of the gene cluster that mediates the biosynthesis of fungal ergot alkaloid. DmaW catalyzes the first step of ergot alkaloid biosynthesis by condensing dimethylallyl diphosphate (DMAP) and tryptophan to form 4-dimethylallyl-L-tryptophan. The second step is catalyzed by the methyltransferase easF that methylates 4-dimethylallyl-L-tryptophan in the presence of S-adenosyl-L-methionine, resulting in the formation of 4-dimethylallyl-L-abrine. The catalase easC and the FAD-dependent oxidoreductase easE then transform 4-dimethylallyl-L-abrine to chanoclavine-I which is further oxidized by easD in the presence of NAD(+), resulting in the formation of chanoclavine-I aldehyde. Chanoclavine-I aldehyde is the precursor of ergoamides and ergopeptines in Clavicipitaceae, and clavine-type alcaloids such as fumiclavine in Trichocomaceae. However, the metabolites downstream of chanoclavine-I aldehyde in Arthrodermataceae have not been identified yet. The chain is Tryptophan dimethylallyltransferase from Trichophyton verrucosum (strain HKI 0517).